A 317-amino-acid polypeptide reads, in one-letter code: Transcription cofactor vestigial-like protein 2 (317 aa).

Disordered stretches follow at residues 41–76, 108–128, 191–214, and 253–293; these read CNAS…ERPP, SQPS…SSGP, TEPW…GGAL, and RLAT…PSGD. The span at 44–57 shows a compositional bias: low complexity; that stretch reads SPSSSGSGSSSFSS. Residues 63-76 are compositionally biased toward basic and acidic residues; it reads IKEEEGSPEKERPP. A compositionally biased stretch (low complexity) spans 108–120; the sequence is SQPSSYSPSCTSS. A compositionally biased stretch (basic residues) spans 196–206; it reads HAHPHHAHPHH. The segment covering 272–292 has biased composition (low complexity); it reads KGEPAGAAWAGPGGPFASPSG.

Belongs to the vestigial family. Interacts with TEFs. Binds to TEAD1/TEF1. As to expression, skeletal muscle.

It localises to the nucleus. Functionally, may act as a specific coactivator for the mammalian TEFs. May play a role in the development of skeletal muscles. This is Transcription cofactor vestigial-like protein 2 (VGLL2) from Homo sapiens (Human).